Consider the following 580-residue polypeptide: Acyl-coenzyme A synthetase ACSM3, mitochondrial (580 aa).

Residues 1-21 constitute a mitochondrion transit peptide; that stretch reads MVMLLRARCFQRLAIPDPMRV. An N6-succinyllysine mark is found at K67 and K100. K151 is subject to N6-acetyllysine. Residues 229–237, 368–373, D455, R470, and K566 each bind ATP; these read TSGTTGPPK and EGYGQT.

Belongs to the ATP-dependent AMP-binding enzyme family. The cofactor is Mg(2+). Mn(2+) serves as cofactor. As to expression, detected in kidney (at protein level). Detected in kidney proximal tubules and in liver. Detected at low levels in testis, stomach, heart and lung.

It localises to the mitochondrion. The protein localises to the mitochondrion matrix. It carries out the reaction a medium-chain fatty acid + ATP + CoA = a medium-chain fatty acyl-CoA + AMP + diphosphate. The enzyme catalyses propanoate + ATP + CoA = propanoyl-CoA + AMP + diphosphate. It catalyses the reaction butanoate + ATP + CoA = butanoyl-CoA + AMP + diphosphate. The catalysed reaction is 2-methylpropanoate + ATP + CoA = 2-methylpropanoyl-CoA + AMP + diphosphate. It carries out the reaction 2-methylbutanoate + ATP + CoA = 2-methylbutanoyl-CoA + AMP + diphosphate. The enzyme catalyses octanoate + ATP + CoA = octanoyl-CoA + AMP + diphosphate. Catalyzes the activation of fatty acids by CoA to produce an acyl-CoA, the first step in fatty acid metabolism. Capable of activating medium-chain fatty acids with a preference for isobutyrate among fatty acids with 2-6 carbon atoms. The chain is Acyl-coenzyme A synthetase ACSM3, mitochondrial (Acsm3) from Mus musculus (Mouse).